The chain runs to 807 residues: Ribosome-releasing factor 2, mitochondrial (807 aa).

Residues 1–18 (MFCRKYVFQTWKQLSRSY) constitute a mitochondrion transit peptide. Residues 27-315 (AKTRNIGIIA…GITKYLPSPL (289 aa)) form the tr-type G domain. GTP is bound by residues 36-43 (AHIDAGKT), 100-104 (DTPGH), and 154-157 (NKMD).

The protein belongs to the TRAFAC class translation factor GTPase superfamily. Classic translation factor GTPase family. EF-G/EF-2 subfamily.

The protein resides in the mitochondrion. Its function is as follows. Mitochondrial GTPase that mediates the disassembly of ribosomes from messenger RNA at the termination of mitochondrial protein biosynthesis. Not involved in the GTP-dependent ribosomal translocation step during translation elongation. The sequence is that of Ribosome-releasing factor 2, mitochondrial from Candida albicans (strain SC5314 / ATCC MYA-2876) (Yeast).